The following is a 366-amino-acid chain: tRNA(Met) cytidine acetate ligase (366 aa).

ATP-binding positions include 7-20 (VAEF…HKYL), G96, N152, and R175.

It belongs to the TmcAL family.

The protein resides in the cytoplasm. The enzyme catalyses cytidine(34) in elongator tRNA(Met) + acetate + ATP = N(4)-acetylcytidine(34) in elongator tRNA(Met) + AMP + diphosphate. Functionally, catalyzes the formation of N(4)-acetylcytidine (ac(4)C) at the wobble position of elongator tRNA(Met), using acetate and ATP as substrates. First activates an acetate ion to form acetyladenylate (Ac-AMP) and then transfers the acetyl group to tRNA to form ac(4)C34. This Streptococcus uberis (strain ATCC BAA-854 / 0140J) protein is tRNA(Met) cytidine acetate ligase.